The primary structure comprises 57 residues: DNA-directed RNA polymerase subunit Rpo6 (57 aa).

It belongs to the archaeal Rpo6/eukaryotic RPB6 RNA polymerase subunit family. As to quaternary structure, part of the RNA polymerase complex.

Its subcellular location is the cytoplasm. The enzyme catalyses RNA(n) + a ribonucleoside 5'-triphosphate = RNA(n+1) + diphosphate. DNA-dependent RNA polymerase (RNAP) catalyzes the transcription of DNA into RNA using the four ribonucleoside triphosphates as substrates. The sequence is that of DNA-directed RNA polymerase subunit Rpo6 from Methanocaldococcus jannaschii (strain ATCC 43067 / DSM 2661 / JAL-1 / JCM 10045 / NBRC 100440) (Methanococcus jannaschii).